Reading from the N-terminus, the 53-residue chain is Cytochrome c oxidase subunit 7e (53 aa).

As to quaternary structure, slime mold cytochrome c oxidase consists of at least seven different polypeptides species, subunits I, II, III, IV, V, VI, and VIIe/s in order of MW.

Its subcellular location is the mitochondrion inner membrane. It carries out the reaction 4 Fe(II)-[cytochrome c] + O2 + 8 H(+)(in) = 4 Fe(III)-[cytochrome c] + 2 H2O + 4 H(+)(out). This protein is one of the nuclear-coded polypeptide chains of cytochrome c oxidase, the terminal oxidase in mitochondrial electron transport. The sequence is that of Cytochrome c oxidase subunit 7e (cxgE) from Dictyostelium discoideum (Social amoeba).